A 388-amino-acid chain; its full sequence is Proteasomal ubiquitin receptor ADRM1 homolog rpn1302 (388 aa).

Residues 15 to 132 (RGKYGLVSVK…SLINQLIADP (118 aa)) enclose the Pru domain. 2 disordered regions span residues 202-227 (RASS…EEAT) and 368-388 (SDGE…EKDE). Residues 368–377 (SDGEVEEEGD) show a composition bias toward acidic residues. Residues 378–388 (VEMRESNEKDE) are compositionally biased toward basic and acidic residues.

The protein belongs to the ADRM1 family. As to quaternary structure, component of the 19S proteasome regulatory particle complex. The 2 S.pombe rpn13 homologs, rpn1301 and rpn1302 are present at a 0.2-1 ratio.

The protein resides in the cytoplasm. Its subcellular location is the nucleus. In terms of biological role, component of the 26S proteasome, a multiprotein complex involved in the ATP-dependent degradation of ubiquitinated proteins. This complex plays a key role in the maintenance of protein homeostasis by removing misfolded or damaged proteins, which could impair cellular functions, and by removing proteins whose functions are no longer required. Therefore, the proteasome participates in numerous cellular processes, including cell cycle progression, apoptosis, or DNA damage repair. Within the complex, functions as a proteasomal ubiquitin receptor. The sequence is that of Proteasomal ubiquitin receptor ADRM1 homolog rpn1302 (rpn1302) from Schizosaccharomyces pombe (strain 972 / ATCC 24843) (Fission yeast).